The chain runs to 150 residues: C-type lectin 16 (150 aa).

Positions 1–27 are cleaved as a signal peptide; that stretch reads MKRVRVKVIFVSFGLLVVFLSLSGTAA. Disulfide bonds link Cys-29–Cys-40, Cys-57–Cys-146, and Cys-123–Cys-138. The C-type lectin domain occupies 36–147; the sequence is YEGHCYKPFN…CRMLARFVCE (112 aa).

The protein belongs to the snaclec family. As to quaternary structure, heteromultimer; disulfide-linked. As to expression, expressed by the venom gland.

It localises to the secreted. Interferes with one step of hemostasis (modulation of platelet aggregation, or coagulation cascade, for example). The chain is C-type lectin 16 from Crotalus adamanteus (Eastern diamondback rattlesnake).